We begin with the raw amino-acid sequence, 501 residues long: Flagellin (501 aa).

It belongs to the bacterial flagellin family.

Its subcellular location is the secreted. The protein resides in the bacterial flagellum. Flagellin is the subunit protein which polymerizes to form the filaments of bacterial flagella. The chain is Flagellin (fliC) from Salmonella choleraesuis (strain SC-B67).